The sequence spans 403 residues: Chromatin structure-remodeling complex subunit SFH1 (403 aa).

The tract at residues 58–115 (FPTFDIDSDSNDEEQSSASAGNDDPQANANGGEAAGVNGQGSGDGGSANTGAGRHGKS) is disordered. The segment covering 63-72 (IDSDSNDEEQ) has biased composition (acidic residues). Over residues 84 to 94 (ANANGGEAAGV) the composition is skewed to low complexity. Residues 95 to 105 (NGQGSGDGGSA) are compositionally biased toward gly residues.

Belongs to the SNF5 family.

The protein resides in the nucleus. Its function is as follows. Part of the chromatin structure-remodeling complex (RSC) which is involved in transcription regulation and nucleosome positioning. RSC is responsible for the transfer of a histone octamer from a nucleosome core particle to naked DNA. The reaction requires ATP and involves an activated RSC-nucleosome intermediate. Remodeling reaction also involves DNA translocation, DNA twist and conformational change. As a reconfigurer of centromeric and flanking nucleosomes, RSC complex is required both for proper kinetochore function in chromosome segregation and, via a PKC1-dependent signaling pathway, for organization of the cellular cytoskeleton. This subunit is essential for mitotic growth and required for cell cycle progression. This is Chromatin structure-remodeling complex subunit SFH1 (SFH1) from Candida glabrata (strain ATCC 2001 / BCRC 20586 / JCM 3761 / NBRC 0622 / NRRL Y-65 / CBS 138) (Yeast).